The sequence spans 428 residues: Cytochrome bc complex cytochrome b subunit (428 aa).

Low complexity-rich tracts occupy residues 1-15 (MAEN…TAPA) and 21-52 (APGA…AAAP). The tract at residues 1 to 72 (MAENTPKPAA…RPDPNPFKDS (72 aa)) is disordered. Over residues 59–72 (PPVDRPDPNPFKDS) the composition is skewed to basic and acidic residues. A helical transmembrane segment spans residues 110–130 (YFGGLGLFFFVIQILTGLLLL). Residues His-161 and His-175 each coordinate heme b. Transmembrane regions (helical) follow at residues 162–182 (AWSA…TFFM), 193–213 (WVSG…GYLL), 260–280 (LHVV…LTLV), 312–331 (GIGW…MFPW), 369–389 (ELLA…VPFI), and 401–421 (IFTI…YRVY). Heme b is bound by residues His-261 and His-276.

This sequence belongs to the cytochrome b family. Requires heme b as cofactor.

Its subcellular location is the cell inner membrane. In terms of biological role, component of the green S-bacteria bc complex, which consists of the Rieske protein and cytochrome b subunit but appears to lack a cytochrome c1-equivalent. This complex has a comparatively low redox potential. The chain is Cytochrome bc complex cytochrome b subunit (petB) from Chlorobaculum thiosulfatiphilum (Chlorobium limicola f.sp. thiosulfatophilum).